The following is a 129-amino-acid chain: Small ribosomal subunit protein uS11 (129 aa).

This sequence belongs to the universal ribosomal protein uS11 family. As to quaternary structure, part of the 30S ribosomal subunit. Interacts with proteins S7 and S18. Binds to IF-3.

In terms of biological role, located on the platform of the 30S subunit, it bridges several disparate RNA helices of the 16S rRNA. Forms part of the Shine-Dalgarno cleft in the 70S ribosome. This is Small ribosomal subunit protein uS11 from Anoxybacillus flavithermus (strain DSM 21510 / WK1).